The primary structure comprises 126 residues: MNFADTPLASLDLDWACEEFIKTYGASPQLETGEVIQTNNGLLYLYGKGSLSQRIHDTHLKFKEKEELSFTTIKPAEMKAQQSDLTYYVAIFQSNYFLCVSNPEKGFLRCHNRPFLYPIVAHGSMS.

This is an uncharacterized protein from Agrobacterium tumefaciens (strain 15955).